Reading from the N-terminus, the 162-residue chain is Glycogen accumulation regulator GarA (162 aa).

Phosphothreonine; by PknG is present on Thr-21. The residue at position 22 (Thr-22) is a Phosphothreonine; by PknB. Residues 77–126 (TSAGRHPDSDIFLDDVTVSRRHAEFRLENNEFNVVDVGSLNGTYVNREPV) enclose the FHA domain.

Monomer. In terms of processing, phosphorylated on Thr-22 by PknB. Phosphorylated on Thr-21 by PknG. Phosphorylation at either Thr-21 or Thr-22 prevents binding to target enzymes.

Functionally, involved in regulation of glutamate metabolism. This Mycobacterium tuberculosis (strain CDC 1551 / Oshkosh) protein is Glycogen accumulation regulator GarA (garA).